The primary structure comprises 449 residues: MNKITVDLNNTKPYIKDEEIKALEPFIKEAHKMLHEGSGLGNDFIGWLDLPINYDKDEFQRIKKASNKIKANSDILLVIGIGGSYLGARAAIEMLSHNFRSLLKKEDKEGTDIIFVGNSISSTYMAELLEVIKDRDFSINVISKSGTTTEPAIAFRIFKEILENKYGIEEAKNRIFVTTDKSKGALKTSSDKQGYETFVIPDNVGGRYSVLTAVGLLPISVAGINIDEMLKGAYDAREDFMYDNIEENQCYKYVAARNALYNKGKNTEILANFEPSLHYFGEWWKQLYGESEGKEGKGIFPASVSFSTDLHSMGQYIQEGLRIIFETFINIEKPRKDLEIKSEKENLDGLNFLSGKTVDFVNKQAFRGTVLAHNDGEVPCIVINVPEVSPYYFGYLVYFFEKACGISGYILGVNPFDQPGVEAYKKNMFALLGKEGFEDRKKELEKRMN.

Catalysis depends on Glu290, which acts as the Proton donor. Active-site residues include His311 and Lys425.

This sequence belongs to the GPI family.

The protein resides in the cytoplasm. It catalyses the reaction alpha-D-glucose 6-phosphate = beta-D-fructose 6-phosphate. Its pathway is carbohydrate biosynthesis; gluconeogenesis. It functions in the pathway carbohydrate degradation; glycolysis; D-glyceraldehyde 3-phosphate and glycerone phosphate from D-glucose: step 2/4. In terms of biological role, catalyzes the reversible isomerization of glucose-6-phosphate to fructose-6-phosphate. This is Glucose-6-phosphate isomerase from Clostridium tetani (strain Massachusetts / E88).